We begin with the raw amino-acid sequence, 96 residues long: C-C motif chemokine 20 (96 aa).

Positions 1–26 (MCCTKSLLLAALMSVLLLHLCGESEA) are cleaved as a signal peptide. 2 disulfide bridges follow: cysteine 32–cysteine 58 and cysteine 33–cysteine 74.

It belongs to the intercrine beta (chemokine CC) family. C-terminal processed forms which lack 1, 3 or 6 amino acids are produced by proteolytic cleavage after secretion from peripheral blood monocytes. As to expression, expressed in the seminal plasma, endometrial fluid and follicular fluid (at protein level). Expressed predominantly in the liver, lymph nodes, appendix, peripheral blood lymphocytes, and fetal lung. Low levels seen in thymus, prostate, testis, small intestine and colon.

The protein resides in the secreted. Acts as a ligand for C-C chemokine receptor CCR6. Signals through binding and activation of CCR6 and induces a strong chemotactic response and mobilization of intracellular calcium ions. The ligand-receptor pair CCL20-CCR6 is responsible for the chemotaxis of dendritic cells (DC), effector/memory T-cells and B-cells and plays an important role at skin and mucosal surfaces under homeostatic and inflammatory conditions, as well as in pathology, including cancer and various autoimmune diseases. CCL20 acts as a chemotactic factor that attracts lymphocytes and, slightly, neutrophils, but not monocytes. Involved in the recruitment of both the pro-inflammatory IL17 producing helper T-cells (Th17) and the regulatory T-cells (Treg) to sites of inflammation. Required for optimal migration of thymic natural regulatory T cells (nTregs) and DN1 early thymocyte progenitor cells. C-terminal processed forms have been shown to be equally chemotactically active for leukocytes. Positively regulates sperm motility and chemotaxis via its binding to CCR6 which triggers Ca2+ mobilization in the sperm which is important for its motility. Inhibits proliferation of myeloid progenitors in colony formation assays. May be involved in formation and function of the mucosal lymphoid tissues by attracting lymphocytes and dendritic cells towards epithelial cells. Possesses antibacterial activity towards E.coli ATCC 25922 and S.aureus ATCC 29213. In Homo sapiens (Human), this protein is C-C motif chemokine 20 (CCL20).